The sequence spans 424 residues: Histidine--tRNA ligase (424 aa).

It belongs to the class-II aminoacyl-tRNA synthetase family. In terms of assembly, homodimer.

It is found in the cytoplasm. The catalysed reaction is tRNA(His) + L-histidine + ATP = L-histidyl-tRNA(His) + AMP + diphosphate + H(+). The chain is Histidine--tRNA ligase from Pectobacterium carotovorum subsp. carotovorum (strain PC1).